A 233-amino-acid polypeptide reads, in one-letter code: Germin-like protein 3-7 (233 aa).

Positions 1–35 are cleaved as a signal peptide; that stretch reads MSSSSSMECTGNMSAAPLLVLTVAVLAVLASTCAA. C44 and C63 are oxidised to a cystine. In terms of domain architecture, Cupin type-1 spans 77–225; sequence AGLAAAGSTD…SFQVDAEIIK (149 aa). Residues H125, H127, E132, and H171 each coordinate Mn(2+). N178 is a glycosylation site (N-linked (GlcNAc...) asparagine).

Belongs to the germin family. Oligomer (believed to be a pentamer but probably hexamer).

The protein resides in the secreted. It localises to the extracellular space. It is found in the apoplast. May play a role in plant defense. Probably has no oxalate oxidase activity even if the active site is conserved. The protein is Germin-like protein 3-7 (GER7) of Oryza sativa subsp. japonica (Rice).